Consider the following 228-residue polypeptide: 7-cyano-7-deazaguanine synthase (228 aa).

Residue 11 to 21 (LSGGLDSATVL) participates in ATP binding. Residues cysteine 191, cysteine 201, cysteine 204, and cysteine 207 each coordinate Zn(2+).

This sequence belongs to the QueC family. Zn(2+) is required as a cofactor.

The enzyme catalyses 7-carboxy-7-deazaguanine + NH4(+) + ATP = 7-cyano-7-deazaguanine + ADP + phosphate + H2O + H(+). Its pathway is purine metabolism; 7-cyano-7-deazaguanine biosynthesis. Functionally, catalyzes the ATP-dependent conversion of 7-carboxy-7-deazaguanine (CDG) to 7-cyano-7-deazaguanine (preQ(0)). The sequence is that of 7-cyano-7-deazaguanine synthase from Magnetococcus marinus (strain ATCC BAA-1437 / JCM 17883 / MC-1).